Here is a 241-residue protein sequence, read N- to C-terminus: Uridylate kinase (241 aa).

11-14 (KFSG) contacts ATP. The interval 19-24 (GENGFG) is involved in allosteric activation by GTP. Residue G53 coordinates UMP. ATP-binding residues include G54 and R58. UMP is bound by residues D74 and 135 to 142 (TGNPFFTT). T162, Y168, and D171 together coordinate ATP.

The protein belongs to the UMP kinase family. In terms of assembly, homohexamer.

The protein resides in the cytoplasm. The catalysed reaction is UMP + ATP = UDP + ADP. It functions in the pathway pyrimidine metabolism; CTP biosynthesis via de novo pathway; UDP from UMP (UMPK route): step 1/1. With respect to regulation, allosterically activated by GTP. Inhibited by UTP. Functionally, catalyzes the reversible phosphorylation of UMP to UDP. This chain is Uridylate kinase, found in Wolinella succinogenes (strain ATCC 29543 / DSM 1740 / CCUG 13145 / JCM 31913 / LMG 7466 / NCTC 11488 / FDC 602W) (Vibrio succinogenes).